The sequence spans 453 residues: DNA repair protein RadA (453 aa).

The segment at 10–27 adopts a C4-type zinc-finger fold; it reads CTECGATFPKWAGQCADC. An ATP-binding site is contributed by 96-103; that stretch reads GDPGIGKS. The RadA KNRFG motif motif lies at 252–256; that stretch reads KNRFG. A lon-protease-like region spans residues 351–453; it reads DVFLNVVGGV…LEQALDALFE (103 aa).

Belongs to the RecA family. RadA subfamily.

In terms of biological role, DNA-dependent ATPase involved in processing of recombination intermediates, plays a role in repairing DNA breaks. Stimulates the branch migration of RecA-mediated strand transfer reactions, allowing the 3' invading strand to extend heteroduplex DNA faster. Binds ssDNA in the presence of ADP but not other nucleotides, has ATPase activity that is stimulated by ssDNA and various branched DNA structures, but inhibited by SSB. Does not have RecA's homology-searching function. This chain is DNA repair protein RadA, found in Pseudomonas aeruginosa (strain ATCC 15692 / DSM 22644 / CIP 104116 / JCM 14847 / LMG 12228 / 1C / PRS 101 / PAO1).